We begin with the raw amino-acid sequence, 1302 residues long: Neuroglian (1302 aa).

An N-terminal signal peptide occupies residues 1 to 23; the sequence is MWRQSTILAALLVALLCAGSAES. The Extracellular portion of the chain corresponds to 24-1138; that stretch reads KGNRPPRITK…ANAGWFIGMM (1115 aa). Ig-like C2-type domains lie at 29 to 133, 134 to 225, 245 to 330, 339 to 426, 432 to 524, and 521 to 610; these read PRIT…AELN, AFKD…YKIG, PPVR…QSFS, PYFT…VYLN, PTIS…TRIT, and TRIT…ANLI. 4 cysteine pairs are disulfide-bonded: Cys-59–Cys-111, Cys-155–Cys-212, Cys-268–Cys-317, and Cys-360–Cys-410. N-linked (GlcNAc...) asparagine glycans are attached at residues Asn-182 and Asn-198. Asn-411 and Asn-448 each carry an N-linked (GlcNAc...) asparagine glycan. Fibronectin type-III domains are found at residues 614–711, 716–813, 818–915, 916–1017, and 1021–1119; these read VPNA…TQPD, NPDN…SGED, APTN…TPEG, VPSP…LKDA, and APAT…TVEG. A disulfide bridge connects residues Cys-625 and Cys-706. Asn-652 and Asn-683 each carry an N-linked (GlcNAc...) asparagine glycan. Asn-821 carries an N-linked (GlcNAc...) asparagine glycan. Asn-1125 is a glycosylation site (N-linked (GlcNAc...) asparagine). The helical transmembrane segment at 1139–1154 threads the bilayer; it reads LALAFIIILFIIICII. The Cytoplasmic segment spans residues 1155–1302; it reads RRNRGGKYDV…AAAGAVATYV (148 aa). The span at 1172 to 1182 shows a compositional bias: basic and acidic residues; the sequence is GRRDYPEEGGF. Disordered regions lie at residues 1172–1223 and 1236–1291; these read GRRD…GDTG and VPGK…ASNG. Over residues 1188–1203 the composition is skewed to polar residues; the sequence is PLDNKSAGRQSVSSAN. Residues 1253–1275 show a composition bias toward low complexity; sequence AAAHQAAPTAGGSGAAGSAAAAG.

As to quaternary structure, forms a complex with Nrx-IV/Nrx and Cont. Forms a complex composed of septate junction proteins Nrx-IV/Nrx, Tsf2/MTf, Cont and Nrg during late embryogenesis. As to expression, restricted to the surface of neurons and glia in the developing nervous system. In terms of tissue distribution, restricted to non-neuronal tissues.

The protein localises to the cell membrane. Its subcellular location is the cell junction. It is found in the septate junction. Its function is as follows. Essential for septate junctions. Septate junctions, which are the equivalent of vertebrate tight junctions, are characterized by regular arrays of transverse structures that span the intermembrane space and form a physical barrier to diffusion. Required for formation of the hemolymph-brain barrier (the insect blood-brain barrier). Vital for embryonic development. Involved in the targeting for degradation or recycling of certain septate junction components, including kune and bou/boudin, by regulating their endocytosis. May play a role in neural and glial cell adhesion in the developing embryo. Functionally, may be a more general cell adhesion molecule involved in non-neuronal tissues and imaginal disk morphogenesis. The protein is Neuroglian (Nrg) of Drosophila melanogaster (Fruit fly).